A 216-amino-acid polypeptide reads, in one-letter code: Thioredoxin-like 2, chloroplastic (216 aa).

The N-terminal 58 residues, 1–58, are a transit peptide targeting the chloroplast; sequence MAEALLPLPRRLVVTASTPACSSASSSTSPSPHCLLSRANPRPPRLAAPSPPRHRRLK. The segment covering 19 to 40 has biased composition (low complexity); sequence PACSSASSSTSPSPHCLLSRAN. Residues 19 to 70 form a disordered region; that stretch reads PACSSASSSTSPSPHCLLSRANPRPPRLAAPSPPRHRRLKAHAAVSDKSEQP. Residues 41–51 show a composition bias toward pro residues; it reads PRPPRLAAPSP. Positions 61–188 constitute a Thioredoxin domain; it reads AAVSDKSEQP…LKDAIAVHNT (128 aa). Catalysis depends on nucleophile residues cysteine 111 and cysteine 114. Cysteine 111 and cysteine 114 are joined by a disulfide.

Belongs to the thioredoxin family.

The protein localises to the plastid. Its subcellular location is the chloroplast. Probable thiol-disulfide oxidoreductase that may participate in various redox reactions. The protein is Thioredoxin-like 2, chloroplastic of Oryza sativa subsp. japonica (Rice).